The chain runs to 254 residues: tRNA pseudouridine synthase A (254 aa).

The Nucleophile role is filled by Asp-52. Residue Tyr-111 coordinates substrate.

Belongs to the tRNA pseudouridine synthase TruA family. As to quaternary structure, homodimer.

It catalyses the reaction uridine(38/39/40) in tRNA = pseudouridine(38/39/40) in tRNA. Functionally, formation of pseudouridine at positions 38, 39 and 40 in the anticodon stem and loop of transfer RNAs. The sequence is that of tRNA pseudouridine synthase A from Methylobacterium nodulans (strain LMG 21967 / CNCM I-2342 / ORS 2060).